The chain runs to 374 residues: Alpha-galactosylglucosyldiacylglycerol synthase (374 aa).

Belongs to the glycosyltransferase group 1 family. Glycosyltransferase 4 subfamily. It depends on Mg(2+) as a cofactor.

The protein localises to the cell membrane. It carries out the reaction a 1,2-diacyl-3-O-(alpha-D-glucopyranosyl)-sn-glycerol + UDP-alpha-D-galactose = a 1,2-diacyl-3-O-[alpha-D-galactopyranosyl-(1-&gt;2)-alpha-D-glucopyranosyl]-sn-glycerol + UDP + H(+). With respect to regulation, activated by the negatively charged lipid phosphatidylglycerol (PG). Its function is as follows. Galactosyltransferase involved in the biosynthesis of the bilayer-forming membrane lipid alpha-galactosyl-glucosyldiacylglycerol which is involved in maintaining constant nonbilayer/bilayer conditions (curvature packing stress). Also involved in the beta-lactam resistance. Catalyzes the transfer of a galactosyl residue from UDP-Gal to alpha-glucosyl-DAG (1,2-diacyl-3-O-(alpha-D-glucopyranosyl)-sn-glycerol) acceptor to form the corresponding galactosyl-glycosyl-DAG product (3-O-alpha-(D-galactopyranosyl-alpha-(1-&gt;2)-D-glucopyranosyl)-1,2-diacyl-sn-glycerol). It can only use UDP-Gal as sugar donor and alpha-glucosyl-DAG is the preferred sugar acceptor. This Streptococcus pneumoniae (strain ATCC BAA-255 / R6) protein is Alpha-galactosylglucosyldiacylglycerol synthase (cpoA).